We begin with the raw amino-acid sequence, 63 residues long: Large ribosomal subunit protein uL30 (63 aa).

It belongs to the universal ribosomal protein uL30 family. As to quaternary structure, part of the 50S ribosomal subunit.

This chain is Large ribosomal subunit protein uL30, found in Rhodospirillum rubrum (strain ATCC 11170 / ATH 1.1.1 / DSM 467 / LMG 4362 / NCIMB 8255 / S1).